The primary structure comprises 131 residues: Mesogenin-1 (131 aa).

A disordered region spans residues 22–79; that stretch reads EDRSFGDSASSPESESFDSACSSPDARSSPTAGCEHAEQQKPKVKMSMRRRMKASERE. Low complexity predominate over residues 27–45; that stretch reads GDSASSPESESFDSACSSP. Basic residues predominate over residues 63–73; it reads PKVKMSMRRRM. A bHLH domain is found at 70–124; that stretch reads RRRMKASEREKLRMRSLAEALHQLRDYLPPGYSRRGQPLTKIQTLKYTIQYIKEL.

In terms of tissue distribution, coexpression of ntl and spt is required for expression.

It is found in the nucleus. Its function is as follows. Involved in specifying the paraxial, but not dorsal, mesoderm. May regulate the expression of T-box transcription factors required for mesoderm formation and differentiation. The chain is Mesogenin-1 (msgn1) from Danio rerio (Zebrafish).